The sequence spans 199 residues: Putative acetyltransferase SAV2555 (199 aa).

This sequence belongs to the transferase hexapeptide repeat family.

The chain is Putative acetyltransferase SAV2555 from Staphylococcus aureus (strain Mu50 / ATCC 700699).